The primary structure comprises 691 residues: Proprotein convertase subtilisin/kexin type 9 (691 aa).

Positions 1-30 (MGIRCSTWLRWPLSPQLLLLLLLCPTGSRA) are cleaved as a signal peptide. The propeptide occupies 31–151 (QDEDGDYEEL…IEEDSLVFAQ (121 aa)). Tyr-37 carries the sulfotyrosine modification. A Phosphoserine modification is found at Ser-46. Residues 154–441 (PWNLERIIPA…QRVLTPNRVA (288 aa)) form the Peptidase S8 domain. Catalysis depends on charge relay system residues Asp-185 and His-225. 2 disulfide bridges follow: Cys-222-Cys-254 and Cys-322-Cys-357. Ser-385 acts as the Charge relay system in catalysis. The C-terminal domain stretch occupies residues 449-691 (ETGGQLLCRT…PSAKASWVHQ (243 aa)). 3 disulfide bridges follow: Cys-456/Cys-526, Cys-476/Cys-525, and Cys-485/Cys-508. Positions 495–497 (RGD) match the Cell attachment site motif. Asn-532 carries an N-linked (GlcNAc...) asparagine glycan. 6 disulfide bridges follow: Cys-533-Cys-600, Cys-551-Cys-599, Cys-561-Cys-587, Cys-607-Cys-678, Cys-625-Cys-677, and Cys-634-Cys-653. Ser-687 is subject to Phosphoserine.

Belongs to the peptidase S8 family. As to quaternary structure, monomer. Can self-associate to form dimers and higher multimers which may have increased LDLR degrading activity. The precursor protein but not the mature protein may form multimers. Interacts with APOB, VLDLR, LRP8/APOER2 and BACE1. The full-length immature form (pro-PCSK9) interacts with SCNN1A, SCNN1B and SCNN1G. The pro-PCSK9 form (via C-terminal domain) interacts with LDLR. Interacts (via the C-terminal domain) with ANXA2 (via repeat Annexin 1); the interaction inhibits the degradation of LDLR. The cofactor is Ca(2+). In terms of processing, cleavage by furin and PCSK5 generates a truncated inactive protein that is unable to induce LDLR degradation. Post-translationally, undergoes autocatalytic cleavage in the endoplasmic reticulum to release the propeptide from the N-terminus and the cleavage of the propeptide is strictly required for its maturation and activation. The cleaved propeptide however remains associated with the catalytic domain through non-covalent interactions, preventing potential substrates from accessing its active site. As a result, it is secreted from cells as a propeptide-containing, enzymatically inactive protein. Phosphorylation protects the propeptide against proteolysis. In terms of tissue distribution, highly expressed in 12-day embryo. In the adult, strongly expressed in liver, small intestine, jejunum, and to a lesser extent in kidney, lung, spleen and thymus. Expression in the liver is up-regulated following partial hepatectomy.

It localises to the cytoplasm. Its subcellular location is the secreted. The protein localises to the endosome. It is found in the lysosome. The protein resides in the cell surface. It localises to the endoplasmic reticulum. Its subcellular location is the golgi apparatus. Its activity is regulated as follows. Its proteolytic activity is autoinhibited by the non-covalent binding of the propeptide to the catalytic domain. Inhibited by EGTA. Crucial player in the regulation of plasma cholesterol homeostasis. Binds to low-density lipid receptor family members: low density lipoprotein receptor (LDLR), very low density lipoprotein receptor (VLDLR), apolipoprotein E receptor (LRP1/APOER) and apolipoprotein receptor 2 (LRP8/APOER2), and promotes their degradation in intracellular acidic compartments. Acts via a non-proteolytic mechanism to enhance the degradation of the hepatic LDLR through a clathrin LDLRAP1/ARH-mediated pathway. May prevent the recycling of LDLR from endosomes to the cell surface or direct it to lysosomes for degradation. Can induce ubiquitination of LDLR leading to its subsequent degradation. Inhibits intracellular degradation of APOB via the autophagosome/lysosome pathway in a LDLR-independent manner. Involved in the disposal of non-acetylated intermediates of BACE1 in the early secretory pathway. Inhibits epithelial Na(+) channel (ENaC)-mediated Na(+) absorption by reducing ENaC surface expression primarily by increasing its proteasomal degradation. Regulates neuronal apoptosis via modulation of LRP8/APOER2 levels and related anti-apoptotic signaling pathways. This Rattus norvegicus (Rat) protein is Proprotein convertase subtilisin/kexin type 9 (Pcsk9).